Consider the following 128-residue polypeptide: Cytochrome c' (128 aa).

Heme c is bound by residues Gln13, Gln17, Glu69, Thr70, Cys118, Cys121, and His122.

In terms of processing, binds 1 heme c group covalently per subunit.

Cytochrome c' is the most widely occurring bacterial c-type cytochrome. Cytochromes c' are high-spin proteins and the heme has no sixth ligand. Their exact function is not known. This Magnetospirillum fulvum (Rhodospirillum fulvum) protein is Cytochrome c'.